The sequence spans 121 residues: Fluoride-specific ion channel FluC 1 (121 aa).

Transmembrane regions (helical) follow at residues 3-23, 35-55, 64-84, and 92-112; these read YVYI…ISFL, IANL…IAFF, AITT…LELI, and FITL…LCYV. 2 residues coordinate Na(+): Gly-71 and Thr-74.

The protein belongs to the fluoride channel Fluc/FEX (TC 1.A.43) family.

The protein localises to the cell membrane. It carries out the reaction fluoride(in) = fluoride(out). Na(+) is not transported, but it plays an essential structural role and its presence is essential for fluoride channel function. In terms of biological role, fluoride-specific ion channel. Important for reducing fluoride concentration in the cell, thus reducing its toxicity. In Staphylococcus aureus (strain NCTC 8325 / PS 47), this protein is Fluoride-specific ion channel FluC 1.